The chain runs to 342 residues: Probable dual-specificity RNA methyltransferase RlmN (342 aa).

Glu-91 acts as the Proton acceptor in catalysis. The region spanning 97–327 (YRYGNTVCLS…VTVRRELGDE (231 aa)) is the Radical SAM core domain. A disulfide bridge links Cys-104 with Cys-332. Cys-111, Cys-115, and Cys-118 together coordinate [4Fe-4S] cluster. Residues 158–159 (GE), Ser-190, 213–215 (SLH), and Asn-289 contribute to the S-adenosyl-L-methionine site. Cys-332 serves as the catalytic S-methylcysteine intermediate.

The protein belongs to the radical SAM superfamily. RlmN family. Requires [4Fe-4S] cluster as cofactor.

It is found in the cytoplasm. The catalysed reaction is adenosine(2503) in 23S rRNA + 2 reduced [2Fe-2S]-[ferredoxin] + 2 S-adenosyl-L-methionine = 2-methyladenosine(2503) in 23S rRNA + 5'-deoxyadenosine + L-methionine + 2 oxidized [2Fe-2S]-[ferredoxin] + S-adenosyl-L-homocysteine. The enzyme catalyses adenosine(37) in tRNA + 2 reduced [2Fe-2S]-[ferredoxin] + 2 S-adenosyl-L-methionine = 2-methyladenosine(37) in tRNA + 5'-deoxyadenosine + L-methionine + 2 oxidized [2Fe-2S]-[ferredoxin] + S-adenosyl-L-homocysteine. Functionally, specifically methylates position 2 of adenine 2503 in 23S rRNA and position 2 of adenine 37 in tRNAs. In Carboxydothermus hydrogenoformans (strain ATCC BAA-161 / DSM 6008 / Z-2901), this protein is Probable dual-specificity RNA methyltransferase RlmN.